Here is a 306-residue protein sequence, read N- to C-terminus: Probable 2-dehydro-3-deoxygalactonokinase DgoK1 (306 aa).

The protein belongs to the DgoK family.

It catalyses the reaction 2-dehydro-3-deoxy-D-galactonate + ATP = 2-dehydro-3-deoxy-6-phospho-D-galactonate + ADP + H(+). The protein operates within carbohydrate acid metabolism; D-galactonate degradation; D-glyceraldehyde 3-phosphate and pyruvate from D-galactonate: step 2/3. Involved in the degradation of galactose via the DeLey-Doudoroff pathway. This Rhizobium meliloti (strain 1021) (Ensifer meliloti) protein is Probable 2-dehydro-3-deoxygalactonokinase DgoK1 (dgoK1).